The primary structure comprises 132 residues: Replication enhancer protein (132 aa).

Belongs to the geminiviridae replication enhancer protein family. In terms of assembly, homooligomer. Interacts with the replication-associated protein (REP). Interacts with host proliferating cell nuclear antigen (PCNA). Interacts with host retinoblastoma-related protein 1 (RBR1), and may thereby deregulate the host cell cycle. Oligomerization and interaction with PCNA are necessary for optimal replication enhancement.

In terms of biological role, increases viral DNA accumulation. Enhances infectivity and symptom expression. In Tomato mottle virus (isolate Florida) (ToMoV), this protein is Replication enhancer protein.